Reading from the N-terminus, the 132-residue chain is Small ribosomal subunit protein uS8 (132 aa).

It belongs to the universal ribosomal protein uS8 family. As to quaternary structure, part of the 30S ribosomal subunit. Contacts proteins S5 and S12.

One of the primary rRNA binding proteins, it binds directly to 16S rRNA central domain where it helps coordinate assembly of the platform of the 30S subunit. The chain is Small ribosomal subunit protein uS8 from Limosilactobacillus reuteri (strain DSM 20016) (Lactobacillus reuteri).